We begin with the raw amino-acid sequence, 114 residues long: Superoxide dismutase [Cu-Zn] (114 aa).

Residues His-37, His-39, and His-54 each coordinate Cu cation. Residues 49-73 are disordered; it reads MSSGPHYNPRNKEHGAPTDENRHLG. Positions 54, 62, 71, and 74 each coordinate Zn(2+). Over residues 58–73 the composition is skewed to basic and acidic residues; the sequence is RNKEHGAPTDENRHLG. His-111 provides a ligand contact to Cu cation.

The protein belongs to the Cu-Zn superoxide dismutase family. Homodimer. It depends on Cu cation as a cofactor. Zn(2+) serves as cofactor.

It is found in the cytoplasm. It carries out the reaction 2 superoxide + 2 H(+) = H2O2 + O2. In terms of biological role, destroys radicals which are normally produced within the cells and which are toxic to biological systems. This chain is Superoxide dismutase [Cu-Zn], found in Drosophila madeirensis (Fruit fly).